A 174-amino-acid chain; its full sequence is Flavodoxin (174 aa).

The region spanning 4 to 166 is the Flavodoxin-like domain; it reads IGIFFGSDTG…RIIQWTKKIK (163 aa).

This sequence belongs to the flavodoxin family. FMN serves as cofactor.

In terms of biological role, low-potential electron donor to a number of redox enzymes. This chain is Flavodoxin (fldA), found in Buchnera aphidicola subsp. Baizongia pistaciae (strain Bp).